A 114-amino-acid polypeptide reads, in one-letter code: MANKDQQDNDKYVTLTDEKGNESLYEILFTFHSDEYKKDYILFTPAGSDRITVEDPDQEVEIQAFSFDPTSGDSETDSDLYPIENDDEWNMVSEVLNTFVEDDSLRTDDKNDED.

This sequence belongs to the UPF0473 family.

This is UPF0473 protein OEOE_1164 from Oenococcus oeni (strain ATCC BAA-331 / PSU-1).